The following is a 491-amino-acid chain: Subtilase-type proteinase RRT12 (491 aa).

The signal sequence occupies residues 1 to 17; it reads MKPQCILISLLVNLAYA. Residues Asn-38, Asn-64, Asn-106, and Asn-121 are each glycosylated (N-linked (GlcNAc...) asparagine). The Peptidase S8 domain occupies 142–442; it reads PFDVGDKDRY…FPRLNIEAIA (301 aa). Residues Asp-174 and His-205 each act as charge relay system in the active site. 2 N-linked (GlcNAc...) asparagine glycosylation sites follow: Asn-268 and Asn-356. Ser-365 (charge relay system) is an active-site residue. N-linked (GlcNAc...) asparagine glycosylation is present at Asn-449.

It belongs to the peptidase S8 family. N-glycosylated.

The protein resides in the spore wall. Its function is as follows. Subtilisin-related protease involved in the formation of a protective dityrosine layer required for spore wall assembly. Identified in a screen for mutants with increased levels of rDNA transcription. This is Subtilase-type proteinase RRT12 (RRT12) from Saccharomyces cerevisiae (strain ATCC 204508 / S288c) (Baker's yeast).